A 315-amino-acid polypeptide reads, in one-letter code: uncharacterized protein (315 aa).

Polar residues predominate over residues 1–23 (MSNTDALNTANTQITENVDTSSM). Residues 1–31 (MSNTDALNTANTQITENVDTSSMKVEKTHDS) are disordered.

This is an uncharacterized protein from Acanthamoeba polyphaga mimivirus (APMV).